Reading from the N-terminus, the 255-residue chain is Putative OPA3-like protein CG13603 (255 aa).

A coiled-coil region spans residues 108–154 (KENKKNELAQSEKMELTNMLTEMNFRLERQDAQIREMTRVLADLDSR). Positions 168–187 (VPFDPDTPDQSASARNPKKF) are disordered. Positions 212 to 241 (DGRNRKAKEALQHLDEVAVQLEQSLGEAAT) form a coiled coil.

The protein belongs to the OPA3 family.

This Drosophila melanogaster (Fruit fly) protein is Putative OPA3-like protein CG13603.